Reading from the N-terminus, the 227-residue chain is Putative ankyrin repeat protein RF_0314 (227 aa).

ANK repeat units follow at residues 94–126, 130–164, and 168–199; these read NGCTFLHYSVEDVKVLYDNIPQFLLEKGADPNI, DGNTPLHILINRDFFSSKEIYVAKLLIQYGADIEL, and LGWTPIQCFIQAGNIKLKALLQLVKACKDNDF.

The polypeptide is Putative ankyrin repeat protein RF_0314 (Rickettsia felis (strain ATCC VR-1525 / URRWXCal2) (Rickettsia azadi)).